The chain runs to 395 residues: DDB1- and CUL4-associated factor 4-like protein 2 (395 aa).

2 WD repeats span residues 268-307 (SHDSAVTSLQILQDGQFLVSSDMTGTIKLWDLRATKCVTQ) and 312-351 (VNNSAYLPVHVNEEEGVVAAVGQDCYTRIWSLRHGHLLTT).

The sequence is that of DDB1- and CUL4-associated factor 4-like protein 2 (DCAF4L2) from Homo sapiens (Human).